A 242-amino-acid chain; its full sequence is 3-oxoacyl-[acyl-carrier-protein] reductase FabG (242 aa).

NADP(+) is bound by residues 10 to 13 (GSTR), T35, 57 to 58 (NV), and N84. S136 is a binding site for substrate. The active-site Proton acceptor is the Y149. Residues 149 to 153 (YCAAK) and I182 each bind NADP(+).

This sequence belongs to the short-chain dehydrogenases/reductases (SDR) family. As to quaternary structure, homotetramer.

The enzyme catalyses a (3R)-hydroxyacyl-[ACP] + NADP(+) = a 3-oxoacyl-[ACP] + NADPH + H(+). Its pathway is lipid metabolism; fatty acid biosynthesis. In terms of biological role, catalyzes the NADPH-dependent reduction of beta-ketoacyl-ACP substrates to beta-hydroxyacyl-ACP products, the first reductive step in the elongation cycle of fatty acid biosynthesis. In Haemophilus influenzae (strain ATCC 51907 / DSM 11121 / KW20 / Rd), this protein is 3-oxoacyl-[acyl-carrier-protein] reductase FabG (fabG).